The sequence spans 410 residues: E3 SUMO-protein ligase EGR2 (410 aa).

A compositionally biased stretch (low complexity) spans 68–83; that stretch reads PPASTTASSSVTSASP. 3 disordered regions span residues 68–95, 101–120, and 127–151; these read PPAS…GVCT, PELD…SGCT, and PSAF…SYPS. Positions 104–107 match the HCFC1-binding-motif (HBM) motif; that stretch reads DHLY. Positions 127 to 143 are enriched in low complexity; it reads PSAFLSPPTTSTSSLAY. Residue Lys188 is modified to N6-acetyllysine. Positions 217–286 are disordered; that stretch reads PSAGVTGPGA…PYPCPAEGCD (70 aa). The span at 222 to 231 shows a compositional bias: gly residues; that stretch reads TGPGASGGSE. A compositionally biased stretch (polar residues) spans 237–248; the sequence is GSGSAAVTTSPY. C2H2-type zinc fingers lie at residues 278–302, 308–330, and 336–358; these read YPCP…IRIH, FQCR…IRTH, and FACD…TKIH. Positions 349–410 are disordered; sequence DERKRHTKIH…LACTSRTRTP (62 aa). Positions 353 to 363 are enriched in basic residues; it reads RHTKIHLRQKE. Low complexity predominate over residues 367–380; that stretch reads SAPSSSASAQPSAS.

The protein belongs to the EGR C2H2-type zinc-finger protein family. As to quaternary structure, interacts with HCFC1. Interacts with WWP2. Interacts with UBC9. Interacts with CITED1. Interacts (via phosphorylated form) with SFN. Ubiquitinated by WWP2 leading to proteasomal degradation. In terms of processing, acetylated. May be deacetylated by HDAC6, HDAC10 or SIRT1.

The protein resides in the nucleus. It functions in the pathway protein modification; protein sumoylation. In terms of biological role, sequence-specific DNA-binding transcription factor. Plays a role in hindbrain segmentation by regulating the expression of a subset of homeobox containing genes and in Schwann cell myelination by regulating the expression of genes involved in the formation and maintenance of myelin. Binds to two EGR2-consensus sites EGR2A (5'-CTGTAGGAG-3') and EGR2B (5'-ATGTAGGTG-3') in the HOXB3 enhancer and promotes HOXB3 transcriptional activation. Binds to specific DNA sites located in the promoter region of HOXA4, HOXB2 and ERBB2. Regulates hindbrain segmentation by controlling the expression of Hox genes, such as HOXA4, HOXB3 and HOXB2, and thereby specifying odd and even rhombomeres. Promotes the expression of HOXB3 in the rhombomere r5 in the hindbrain. Regulates myelination in the peripheral nervous system after birth, possibly by regulating the expression of myelin proteins, such as MPZ, and by promoting the differentiation of Schwann cells. Involved in the development of the jaw openener musculature, probably by playing a role in its innervation through trigeminal motor neurons. May play a role in adipogenesis, possibly by regulating the expression of CEBPB. Functionally, E3 SUMO-protein ligase helping SUMO1 conjugation to its coregulators NAB1 and NAB2, whose sumoylation down-regulates EGR2 transcriptional activity. The polypeptide is E3 SUMO-protein ligase EGR2 (EGR2) (Cricetulus griseus (Chinese hamster)).